A 695-amino-acid polypeptide reads, in one-letter code: uncharacterized protein (695 aa).

This is an uncharacterized protein from Xanthomonas campestris pv. campestris (strain B100).